Reading from the N-terminus, the 238-residue chain is Small ribosomal subunit protein uS2 (238 aa).

This sequence belongs to the universal ribosomal protein uS2 family.

The protein is Small ribosomal subunit protein uS2 of Haemophilus ducreyi (strain 35000HP / ATCC 700724).